A 366-amino-acid polypeptide reads, in one-letter code: Histidinol-phosphate aminotransferase (366 aa).

K226 bears the N6-(pyridoxal phosphate)lysine mark.

This sequence belongs to the class-II pyridoxal-phosphate-dependent aminotransferase family. Histidinol-phosphate aminotransferase subfamily. The cofactor is pyridoxal 5'-phosphate.

The enzyme catalyses L-histidinol phosphate + 2-oxoglutarate = 3-(imidazol-4-yl)-2-oxopropyl phosphate + L-glutamate. The protein operates within amino-acid biosynthesis; L-histidine biosynthesis; L-histidine from 5-phospho-alpha-D-ribose 1-diphosphate: step 7/9. In Methanosarcina barkeri (strain Fusaro / DSM 804), this protein is Histidinol-phosphate aminotransferase.